The primary structure comprises 184 residues: Large ribosomal subunit protein uL22 (184 aa).

Residues 160–184 are disordered; sequence PEEEVAQKKKISQKKLKKQKLMARE. Residues 167 to 184 are compositionally biased toward basic residues; the sequence is KKKISQKKLKKQKLMARE.

It belongs to the universal ribosomal protein uL22 family. Component of the large ribosomal subunit. As to expression, expressed in pancreas, lung, colon, cystic duct, gall bladder, kidney and liver. Expressed at high levels in the well differentiated pancreatic tumor cell lines HPAF, COLO 357 and Capan-1, the moderately differentiated pancreatic tumor cell lines T3M-4, AsPc-1 and BxPc-3, the poorly differentiated pancreatic tumor cell line MIA PaCa-2, and the pancreatic tumor cell lines of undefined differentiation status such as SW979. Expressed at lower levels in the poorly differentiated pancreatic tumor cell lines HCG-25 and PANC-1.

Its subcellular location is the cytoplasm. In terms of biological role, component of the large ribosomal subunit. The ribosome is a large ribonucleoprotein complex responsible for the synthesis of proteins in the cell. The polypeptide is Large ribosomal subunit protein uL22 (RPL17) (Homo sapiens (Human)).